A 549-amino-acid chain; its full sequence is Glucose-6-phosphate isomerase (549 aa).

The active-site Proton donor is E355. Active-site residues include H386 and K514.

It belongs to the GPI family.

It is found in the cytoplasm. The enzyme catalyses alpha-D-glucose 6-phosphate = beta-D-fructose 6-phosphate. It functions in the pathway carbohydrate biosynthesis; gluconeogenesis. The protein operates within carbohydrate degradation; glycolysis; D-glyceraldehyde 3-phosphate and glycerone phosphate from D-glucose: step 2/4. Functionally, catalyzes the reversible isomerization of glucose-6-phosphate to fructose-6-phosphate. The chain is Glucose-6-phosphate isomerase from Edwardsiella ictaluri (strain 93-146).